Reading from the N-terminus, the 189-residue chain is Calcyphosin (189 aa).

EF-hand domains lie at 21–56 (LGIQ…LGLV), 57–92 (LDTA…PMSQ), 93–128 (AREA…RTHP), and 136–172 (TEEE…VSAS). The Ca(2+) site is built by D34, D36, S38, S40, E45, D70, D72, S74, T76, E81, D106, S108, D110, and D117. S40 is modified (phosphoserine; by PKA).

As to quaternary structure, monomer. Does not form oligomers in the presence of calcium. Phosphorylated in response to thyrotropin and cAMP. As to expression, detected in thyroid, salivary gland, lung, brain and cerebellum (at protein level).

It is found in the cytoplasm. Its function is as follows. Calcium-binding protein. May play a role in cellular signaling events (Potential). This chain is Calcyphosin (CAPS), found in Canis lupus familiaris (Dog).